The following is a 195-amino-acid chain: Protein GrpE (195 aa).

Positions 1–60 (MAKDEEKNSQASAAPNEGEVKAKQEQTSAKEPAAKAGETEKVADLQKQVEELTKQLDDQK) are disordered. The segment covering 37–60 (GETEKVADLQKQVEELTKQLDDQK) has biased composition (basic and acidic residues).

It belongs to the GrpE family. As to quaternary structure, homodimer.

It is found in the cytoplasm. Its function is as follows. Participates actively in the response to hyperosmotic and heat shock by preventing the aggregation of stress-denatured proteins, in association with DnaK and GrpE. It is the nucleotide exchange factor for DnaK and may function as a thermosensor. Unfolded proteins bind initially to DnaJ; upon interaction with the DnaJ-bound protein, DnaK hydrolyzes its bound ATP, resulting in the formation of a stable complex. GrpE releases ADP from DnaK; ATP binding to DnaK triggers the release of the substrate protein, thus completing the reaction cycle. Several rounds of ATP-dependent interactions between DnaJ, DnaK and GrpE are required for fully efficient folding. This Limosilactobacillus fermentum (strain NBRC 3956 / LMG 18251) (Lactobacillus fermentum) protein is Protein GrpE.